Here is a 466-residue protein sequence, read N- to C-terminus: Argininosuccinate lyase (466 aa).

2-(N(omega)-L-arginino)succinate-binding residues include serine 27, asparagine 114, and threonine 159. The active-site Proton acceptor is the histidine 160. Catalysis depends on serine 281, which acts as the Proton donor. Residues asparagine 289, tyrosine 321, glutamine 326, and lysine 329 each contribute to the 2-(N(omega)-L-arginino)succinate site.

Belongs to the lyase 1 family. Argininosuccinate lyase subfamily. In terms of assembly, homotetramer. As to expression, eye lens.

It carries out the reaction 2-(N(omega)-L-arginino)succinate = fumarate + L-arginine. It participates in amino-acid biosynthesis; L-arginine biosynthesis; L-arginine from L-ornithine and carbamoyl phosphate: step 3/3. Its function is as follows. Delta crystallin, the principal crystallin in embryonic lens, is found only in birds and reptiles. This protein also functions as an enzymatically active argininosuccinate lyase. This is Argininosuccinate lyase (ASL) from Anser anser anser (Western greylag goose).